The chain runs to 221 residues: Guanylate kinase (221 aa).

In terms of domain architecture, Guanylate kinase-like spans 18 to 196; it reads GFLFILSSPS…SASLIKSIYL (179 aa). Position 25–32 (25–32) interacts with ATP; the sequence is SPSGAGKS.

Belongs to the guanylate kinase family.

The protein localises to the cytoplasm. It catalyses the reaction GMP + ATP = GDP + ADP. In terms of biological role, essential for recycling GMP and indirectly, cGMP. The sequence is that of Guanylate kinase from Bartonella quintana (strain Toulouse) (Rochalimaea quintana).